The chain runs to 343 residues: Protein RecA (343 aa).

ATP is bound at residue 66-73 (GPESSGKT).

The protein belongs to the RecA family.

The protein resides in the cytoplasm. Its function is as follows. Can catalyze the hydrolysis of ATP in the presence of single-stranded DNA, the ATP-dependent uptake of single-stranded DNA by duplex DNA, and the ATP-dependent hybridization of homologous single-stranded DNAs. It interacts with LexA causing its activation and leading to its autocatalytic cleavage. This Rickettsia conorii (strain ATCC VR-613 / Malish 7) protein is Protein RecA.